Reading from the N-terminus, the 143-residue chain is Mediator of RNA polymerase II transcription subunit 10 (143 aa).

The disordered stretch occupies residues 123–143; that stretch reads GAHSNTEISTNPGQKRQGNVS. Over residues 124 to 143 the composition is skewed to polar residues; the sequence is AHSNTEISTNPGQKRQGNVS.

This sequence belongs to the Mediator complex subunit 10 family. As to quaternary structure, component of the Mediator complex.

It localises to the nucleus. In terms of biological role, component of the Mediator complex, a coactivator involved in the regulated transcription of nearly all RNA polymerase II-dependent genes. Mediator functions as a bridge to convey information from gene-specific regulatory proteins to the basal RNA polymerase II transcription machinery. Mediator is recruited to promoters by direct interactions with regulatory proteins and serves as a scaffold for the assembly of a functional preinitiation complex with RNA polymerase II and the general transcription factors. This Yarrowia lipolytica (strain CLIB 122 / E 150) (Yeast) protein is Mediator of RNA polymerase II transcription subunit 10 (NUT2).